The following is a 498-amino-acid chain: MTTKKLYFLSISIIIIVAISIAIYITLNSNTKTRLTNDSQQQIDTIIEHDLQKGHIPGASILIVKNGKVFLNKGYGYQDVDKKVKASPTTKYEIASNTKAFTGLAILKLAQEGRLNLNDAVSKHVPHFKMNYNGQNETITIKQLLAQTSGIPSDITSEDSVTSKNNRLNDVTRAIMGDELHHKPGEEFEYSNMNYDLLGLIIQNVTKQSYTKYITNSWLKPLHMTHTSFKQTNYKSKHDAIGYELQGSTPVVSKPEFNLWDTPSAYMMTSTEDLEHWIKFQLNPPDKYKSLVQQSHKNLSSTIGEPNANAYASGWFTNNDEHLVFHSGTLDNFSSFILLNPKQNYGIVVLANLNSEYVPKLVEHLNTQIVNHKRYSTVASMLNQYKDQFNIVTVLMTTLILLAFIFSAYRAWQMRHGQILLRRSKRIAVLSWLSLCICIALALILYALPYLILGSNNWSFVLTWLPIEIKLALITTLIALFSTLIVILLFLHTKITKT.

The next 4 helical transmembrane spans lie at 6 to 26 (LYFL…IYIT), 389 to 409 (FNIV…FSAY), 433 to 453 (LSLC…YLIL), and 471 to 491 (LALI…LLFL).

Its subcellular location is the cell membrane. Functionally, its precise function is unknown. Has no penicillin-binding activity and is not involved in methicillin resistance. In Staphylococcus aureus (strain COL), this protein is Protein flp (flp).